The chain runs to 90 residues: UPF0329 protein ECU04_1650 (90 aa).

The protein belongs to the UPF0329 family.

This is UPF0329 protein ECU04_1650 from Encephalitozoon cuniculi (strain GB-M1) (Microsporidian parasite).